Reading from the N-terminus, the 395-residue chain is uncharacterized protein (395 aa).

Disordered stretches follow at residues 1–121 (MLLP…TANS), 136–187 (MRMK…LDRN), 308–335 (QNNE…SKDE), and 365–395 (IQKF…NEGD). Over residues 13–28 (PKGEAKSLVARERKSQ) the composition is skewed to basic and acidic residues. Residues 64–73 (KSAKLRRKKS) show a composition bias toward basic residues. Positions 97 to 111 (SIEKKKEEMTSKLPE) are enriched in basic and acidic residues. Residues 144 to 164 (TSRMATKSDSSLETMPESSHN) are compositionally biased toward polar residues. The span at 170 to 179 (KSRKSQRTRG) shows a compositional bias: basic residues. Over residues 365–377 (IQKFRKKYQKQLK) the composition is skewed to basic residues. Basic and acidic residues predominate over residues 378–395 (KSQEEKKDDTKTAKNEGD).

This is an uncharacterized protein from Caenorhabditis elegans.